We begin with the raw amino-acid sequence, 153 residues long: Large-conductance mechanosensitive channel (153 aa).

2 consecutive transmembrane segments (helical) span residues 16 to 36 and 88 to 108; these read VIDL…VKSL and GLFI…FMLV.

Belongs to the MscL family. Homopentamer.

The protein localises to the cell inner membrane. Functionally, channel that opens in response to stretch forces in the membrane lipid bilayer. May participate in the regulation of osmotic pressure changes within the cell. This Chromobacterium violaceum (strain ATCC 12472 / DSM 30191 / JCM 1249 / CCUG 213 / NBRC 12614 / NCIMB 9131 / NCTC 9757 / MK) protein is Large-conductance mechanosensitive channel.